The primary structure comprises 506 residues: Maturase K (506 aa).

It belongs to the intron maturase 2 family. MatK subfamily.

It localises to the plastid. It is found in the chloroplast. In terms of biological role, usually encoded in the trnK tRNA gene intron. Probably assists in splicing its own and other chloroplast group II introns. In Medicago truncatula (Barrel medic), this protein is Maturase K.